The following is a 256-amino-acid chain: 5-oxoprolinase subunit A (256 aa).

The protein belongs to the LamB/PxpA family. In terms of assembly, forms a complex composed of PxpA, PxpB and PxpC.

The enzyme catalyses 5-oxo-L-proline + ATP + 2 H2O = L-glutamate + ADP + phosphate + H(+). Functionally, catalyzes the cleavage of 5-oxoproline to form L-glutamate coupled to the hydrolysis of ATP to ADP and inorganic phosphate. The sequence is that of 5-oxoprolinase subunit A from Azoarcus sp. (strain BH72).